The following is a 144-amino-acid chain: MACGENERASTSPPNRAAAARGGRLTLLDGCCVALVLALTAWSGFFVYRMQGGARTLDIRCGAQRWTYPLDQERVIRVRGPLGETEIEIRAGAARVCRSPCANGTCIAHPPVQRVGEWNACLPNGVFLYVHGTDAAEPEADAVQ.

The chain crosses the membrane as a helical span at residues 25 to 47 (LTLLDGCCVALVLALTAWSGFFV).

The protein resides in the membrane. This is an uncharacterized protein from Treponema pallidum (strain Nichols).